Here is a 355-residue protein sequence, read N- to C-terminus: D-alanine--D-alanine ligase (355 aa).

The 208-residue stretch at 143-350 folds into the ATP-grasp domain; it reads KTIFSNLKIP…IEQLVAKLVD (208 aa). Residue 178–233 participates in ATP binding; it reads LKKLNFPFFVKPSNSGSSLGISKVINESEILQSLEKAQKIDSRILVEEGLEVREIE. 3 residues coordinate Mg(2+): aspartate 303, glutamate 317, and asparagine 319.

Belongs to the D-alanine--D-alanine ligase family. Mg(2+) is required as a cofactor. The cofactor is Mn(2+).

It is found in the cytoplasm. It carries out the reaction 2 D-alanine + ATP = D-alanyl-D-alanine + ADP + phosphate + H(+). It functions in the pathway cell wall biogenesis; peptidoglycan biosynthesis. In terms of biological role, cell wall formation. This Prochlorococcus marinus (strain MIT 9215) protein is D-alanine--D-alanine ligase.